The primary structure comprises 403 residues: GPI-N-acetylgalactosamine transferase PGAP4 (403 aa).

The Cytoplasmic segment spans residues 1–22 (MSTSTSPAAMLLRRLRRLSWGS). The helical transmembrane segment at 23-43 (TAVQLFILTVVTFGLLAPLAC) threads the bilayer. Residues 44–259 (HRLLHSYFYL…RLQHYTNPEP (216 aa)) lie on the Lumenal side of the membrane. Val109 lines the UDP-N-acetyl-alpha-D-galactosamine pocket. Cystine bridges form between Cys132-Cys136 and Cys144-Cys194. The short motif at 211–213 (EDD) is the DXD motif element. A helical transmembrane segment spans residues 260-280 (MRILEWVGVGMLLGPLLTWIY). At 281 to 287 (MRFASRP) the chain is on the cytoplasmic side. Residues 288-308 (GFSWPVMLFFSLYSMGLVELV) traverse the membrane as a helical segment. Topologically, residues 309-403 (GRHYFLELRR…LRYNFHPSLL (95 aa)) are lumenal. Cys332 and Cys333 form a disulfide bridge. Thr334, Pro335, and Lys362 together coordinate UDP-N-acetyl-alpha-D-galactosamine.

This sequence belongs to the PGAP4 family. In terms of processing, glycosylated.

It is found in the golgi apparatus membrane. Its function is as follows. Golgi-resident glycosylphosphatidylinositol (GPI)-N-acetylgalactosamine transferase that catalyzes the N-acetyl-beta-D-galactosamine transfer from an UDP-N-acetyl-alpha-D-galactosamine to the 4-OH-position of first mannose of the glycosylphosphatidylinositol (GPI) of a GPI-anchored protein (GPI-AP). This modification occurs after the fatty acid remodeling step of the GPI-anchor maturation. The sequence is that of GPI-N-acetylgalactosamine transferase PGAP4 from Pongo abelii (Sumatran orangutan).